Reading from the N-terminus, the 377-residue chain is Membrane progestin receptor epsilon (377 aa).

A disordered region spans residues 1–40 (MPRRLQPRGAGTKGPPAPAPAASGAARNSHSAASRDPPAS). At 1 to 86 (MPRRLQPRGA…VLKPTNETLN (86 aa)) the chain is on the cytoplasmic side. Over residues 9–26 (GAGTKGPPAPAPAASGAA) the composition is skewed to low complexity. Residues 87 to 107 (FWTHFIPLLLFLSKFCRLFFL) traverse the membrane as a helical segment. Topologically, residues 108–116 (SGGDVPFHH) are extracellular. The chain crosses the membrane as a helical span at residues 117–137 (PWLLPLWCYASGVLLTFAMSC). At 138–162 (TAHVFSCLSLRLRAAFFYLDYASIS) the chain is on the cytoplasmic side. The helical transmembrane segment at 163-183 (YYGFGSTVAYYYYLLPGLSLL) threads the bilayer. At 184–205 (DARVMTPYLQQRLGWHVDCTRL) the chain is on the extracellular side. A helical transmembrane segment spans residues 206–226 (IAAYRALVLPVAFVLAVACTV). Residues 227 to 243 (ACCKSRTDWCTYPFALR) are Cytoplasmic-facing. The chain crosses the membrane as a helical span at residues 244 to 264 (TFVFVMPLSMACPIMLESWLF). Over 265-301 (DLRGENPTLFVHFYRRYFWLVVAAFFNVSKIPERIQP) the chain is Extracellular. The chain crosses the membrane as a helical span at residues 302–322 (GLFDIIGHSHQLFHIFTFLSI). The Cytoplasmic segment spans residues 323–343 (YDQVYYVEEGLRQFLQAPPAA). The helical transmembrane segment at 344 to 364 (PTFSGTVGYMLLLVVCLGLVI) threads the bilayer. The Extracellular portion of the chain corresponds to 365-377 (RKFLNSSEFCSKK).

It belongs to the ADIPOR family. Homodimer. Expression levels vary widely in a range of tissues. Expressed in the brain, at high level in the pituitary gland and also in hypothalamus, limbic system, caudate nucleus accumens, pons and olfactory bulb.

It is found in the cell membrane. In terms of biological role, plasma membrane progesterone (P4) receptor coupled to G proteins. Seems to act through a G(s) mediated pathway. May be involved in regulating rapid P4 signaling in the nervous system. Also binds dehydroepiandrosterone (DHEA), pregnanolone, pregnenolone and allopregnanolone. This is Membrane progestin receptor epsilon from Homo sapiens (Human).